A 378-amino-acid polypeptide reads, in one-letter code: Geraniol dehydrogenase (378 aa).

Zn(2+) is bound by residues C48, H75, C105, C108, C111, C119, and C179.

It belongs to the zinc-containing alcohol dehydrogenase family. In terms of assembly, monomer. It depends on Zn(2+) as a cofactor.

It catalyses the reaction (2E)-geraniol + NAD(+) = (2E)-geranial + NADH + H(+). The enzyme catalyses (2E,6E)-farnesol + NAD(+) = (2E,6E)-farnesal + NADH + H(+). Functionally, catalyzes the NAD(+)-dependent oxidation of geraniol to geranial, playing an important role in the biosynthesis of neral, an alarm pheromone. Cannot use NADP(+). Also acts as a farnesol dehydrogenase by catalyzing the oxidation of (2E,6E)-farnesol to (2E,6E)-farnesal, with lower activity compared to geraniol dehydrogenase activity. The chain is Geraniol dehydrogenase from Carpoglyphus lactis (Dried fruit mite).